We begin with the raw amino-acid sequence, 975 residues long: Aminopeptidase N (975 aa).

Residues 1 to 11 (MAKGFYISKAL) are Cytoplasmic-facing. The helical; Signal-anchor for type II membrane protein transmembrane segment at 12-32 (GILAIVLGIAAVSTIIALSVV) threads the bilayer. The segment at 33-74 (YAQEKNKNAESSPVSSPVSSPVSSPVSPTNPSTTAATTLAQS) is cytosolic Ser/Thr-rich junction. The Extracellular segment spans residues 33 to 975 (YAQEKNKNAE…VLQWFRENSQ (943 aa)). The tract at residues 41–68 (AESSPVSSPVSSPVSSPVSPTNPSTTAA) is disordered. Residues 43 to 59 (SSPVSSPVSSPVSSPVS) show a composition bias toward low complexity. Residues 75 to 975 (KPWNHYRLPK…VLQWFRENSQ (901 aa)) are metalloprotease. Asn134 carries N-linked (GlcNAc...) asparagine glycosylation. The residue at position 182 (Tyr182) is a Sulfotyrosine. N-linked (GlcNAc...) asparagine glycosylation is found at Asn240 and Asn271. 358–362 (GAMEN) is a substrate binding site. His394 contacts Zn(2+). Glu395 (proton acceptor) is an active-site residue. His398 and Glu417 together coordinate Zn(2+). A sulfotyrosine mark is found at Tyr425 and Tyr430. N-linked (GlcNAc...) asparagine glycosylation is found at Asn533, Asn580, Asn633, Asn689, and Asn747. 2 cysteine pairs are disulfide-bonded: Cys769-Cys776 and Cys806-Cys842. Asn826 carries N-linked (GlcNAc...) asparagine glycosylation.

The protein belongs to the peptidase M1 family. In terms of assembly, (Microbial infection) Interacts with CCoV spike glycoprotein. Homodimer. Interacts with SLC6A19. It depends on Zn(2+) as a cofactor. Post-translationally, sulfated. N- and O-glycosylated. In terms of processing, may undergo proteolysis and give rise to a soluble form.

The protein localises to the cell membrane. It carries out the reaction Release of an N-terminal amino acid, Xaa-|-Yaa- from a peptide, amide or arylamide. Xaa is preferably Ala, but may be most amino acids including Pro (slow action). When a terminal hydrophobic residue is followed by a prolyl residue, the two may be released as an intact Xaa-Pro dipeptide.. Broad specificity aminopeptidase which plays a role in the final digestion of peptides generated from hydrolysis of proteins by gastric and pancreatic proteases. Also involved in the processing of various peptides including peptide hormones, such as angiotensin III and IV, neuropeptides, and chemokines. May also be involved the cleavage of peptides bound to major histocompatibility complex class II molecules of antigen presenting cells. May have a role in angiogenesis and promote cholesterol crystallization. May have a role in amino acid transport by acting as binding partner of amino acid transporter SLC6A19 and regulating its activity. In terms of biological role, (Microbial infection) Probable receptor for canine coronavirus (CCoV). The polypeptide is Aminopeptidase N (ANPEP) (Canis lupus familiaris (Dog)).